Reading from the N-terminus, the 504-residue chain is Carnosic acid synthase (504 aa).

A helical membrane pass occupies residues 4 to 24 (FIILSLAFIAAWVVYSRWSEY). Cys447 provides a ligand contact to heme.

It belongs to the cytochrome P450 family. Heme is required as a cofactor. As to expression, expressed in glandular trichomes of young leaves.

Its subcellular location is the membrane. It carries out the reaction 11-hydroxyferruginol + 3 reduced [NADPH--hemoprotein reductase] + 3 O2 = carnosate + 3 oxidized [NADPH--hemoprotein reductase] + 4 H2O + 4 H(+). The enzyme catalyses miltiradiene + 2 reduced [NADPH--hemoprotein reductase] + 2 O2 = miltiradien-20-al + 2 oxidized [NADPH--hemoprotein reductase] + 3 H2O + 2 H(+). The catalysed reaction is ferruginol + 3 reduced [NADPH--hemoprotein reductase] + 3 O2 = pisiferate + 3 oxidized [NADPH--hemoprotein reductase] + 4 H2O + 4 H(+). Its pathway is secondary metabolite biosynthesis; terpenoid biosynthesis. Functionally, monooxygenase involved in the biosynthesis of carnosate, a potent antioxidant labdane-related diterpene natural products. Catalyzes the oxidation of 11-hydroxyferruginol to produce carnosate. Mediates the conversion of miltiradien into miltiradien-20-al. Also involved in the production of pisiferic acid and derivative products from ferruginol. The chain is Carnosic acid synthase from Rosmarinus officinalis (Rosemary).